The chain runs to 318 residues: Thymidylate synthase (318 aa).

DUMP contacts are provided by residues R25 and 180–181; that span reads RR. C200 (nucleophile) is an active-site residue. Residues 220-223, N231, and 261-263 each bind dUMP; these read RSGD and HIY. D223 is a (6R)-5,10-methylene-5,6,7,8-tetrahydrofolate binding site. Position 317 (A317) interacts with (6R)-5,10-methylene-5,6,7,8-tetrahydrofolate.

Belongs to the thymidylate synthase family. Bacterial-type ThyA subfamily. As to quaternary structure, homodimer.

It is found in the cytoplasm. It catalyses the reaction dUMP + (6R)-5,10-methylene-5,6,7,8-tetrahydrofolate = 7,8-dihydrofolate + dTMP. It participates in pyrimidine metabolism; dTTP biosynthesis. In terms of biological role, catalyzes the reductive methylation of 2'-deoxyuridine-5'-monophosphate (dUMP) to 2'-deoxythymidine-5'-monophosphate (dTMP) while utilizing 5,10-methylenetetrahydrofolate (mTHF) as the methyl donor and reductant in the reaction, yielding dihydrofolate (DHF) as a by-product. This enzymatic reaction provides an intracellular de novo source of dTMP, an essential precursor for DNA biosynthesis. The sequence is that of Thymidylate synthase from Lactobacillus helveticus (strain DPC 4571).